The sequence spans 564 residues: Nucleoprotein (564 aa).

Residues 54–236 (LRKNKRGEED…VTKDESSINI (183 aa)) form a binding site for the cap structure m7GTP region. Positions 380 and 382 each coordinate Mn(2+). E390, C497, H500, and C525 together coordinate Zn(2+). D529 provides a ligand contact to Mn(2+).

This sequence belongs to the arenaviridae nucleocapsid protein family. As to quaternary structure, homomultimerizes to form the nucleocapsid. Binds to viral genomic RNA. Interacts with glycoprotein G2. Interacts with protein Z; this interaction probably directs the encapsidated genome to budding sites. Interacts with protein L; this interaction does not interfere with Z-L interaction. Interacts with host IKBKE (via Protein kinase domain); the interaction inhibits IKBKE kinase activity.

The protein resides in the virion. Its subcellular location is the host cytoplasm. Encapsidates the genome, protecting it from nucleases. The encapsidated genomic RNA is termed the nucleocapsid (NC). Serves as template for viral transcription and replication. The increased presence of protein N in host cell does not seem to trigger the switch from transcription to replication as observed in other negative strain RNA viruses. Through the interaction with host IKBKE, strongly inhibits the phosphorylation and nuclear translocation of host IRF3, a protein involved in interferon activation pathway, leading to the inhibition of interferon-beta and IRF3-dependent promoters activation. Also encodes a functional 3'-5' exoribonuclease that degrades preferentially dsRNA substrates and thereby participates in the suppression of interferon induction. This chain is Nucleoprotein, found in Calomys callosus (Large vesper mouse).